Consider the following 148-residue polypeptide: Putative pre-16S rRNA nuclease (148 aa).

Belongs to the YqgF nuclease family.

The protein resides in the cytoplasm. In terms of biological role, could be a nuclease involved in processing of the 5'-end of pre-16S rRNA. This is Putative pre-16S rRNA nuclease from Chlamydia trachomatis serovar L2 (strain ATCC VR-902B / DSM 19102 / 434/Bu).